A 306-amino-acid chain; its full sequence is Small ribosomal subunit protein uS2 (306 aa).

Serine 2 is subject to N-acetylserine. 2 laminin-binding regions span residues 161 to 180 (IPCNNKGAHSVGLMWWMLAR) and 205 to 229 (RDPEEIEKEEQAAAEKATTKEEFQG). [DE]-W-[ST] repeat units follow at residues 230–232 (EWT), 245–247 (DWS), 276–278 (DWS), 286–288 (DWS), and 304–306 (EWS). The interval 242–306 (EVADWSEGVQ…EWTGTTTEWS (65 aa)) is laminin-binding. The disordered stretch occupies residues 247-306 (SEGVQVPSVPIQQFTAERTDVPPAPKPTEDWSTQPASTDDWSAAPTAQASEWTGTTTEWS). The span at 276-306 (DWSTQPASTDDWSAAPTAQASEWTGTTTEWS) shows a compositional bias: polar residues.

This sequence belongs to the universal ribosomal protein uS2 family. Monomer (37LRP) and homodimer (67LR). Component of the small ribosomal subunit. Mature ribosomes consist of a small (40S) and a large (60S) subunit. The 40S subunit contains about 33 different proteins and 1 molecule of RNA (18S). The 60S subunit contains about 49 different proteins and 3 molecules of RNA (28S, 5.8S and 5S). Interacts with rps21. Interacts with several laminins including at least lamb1. Interacts with mdk. Acylated. Acylation may be a prerequisite for conversion of the monomeric 37 kDa laminin receptor precursor (37LRP) to the mature dimeric 67 kDa laminin receptor (67LR), and may provide a mechanism for membrane association. Post-translationally, cleaved by stromelysin-3 (ST3) at the cell surface. Cleavage by stromelysin-3 may be a mechanism to alter cell-extracellular matrix interactions.

Its subcellular location is the cell membrane. The protein localises to the cytoplasm. The protein resides in the nucleus. Functionally, required for the assembly and/or stability of the 40S ribosomal subunit. Required for the processing of the 20S rRNA-precursor to mature 18S rRNA in a late step of the maturation of 40S ribosomal subunits. Also functions as a cell surface receptor for laminin. Plays a role in cell adhesion to the basement membrane and in the consequent activation of signaling transduction pathways. May play a role in cell fate determination and tissue morphogenesis. The protein is Small ribosomal subunit protein uS2 (rpsa) of Xenopus laevis (African clawed frog).